A 541-amino-acid chain; its full sequence is Membrane protein insertase YidC (541 aa).

6 consecutive transmembrane segments (helical) span residues 6-26 (NLLL…WESD), 326-346 (VVDY…LMFF), 349-369 (LVHN…GLLY), 420-440 (GGCL…WVLL), 457-477 (LSVQ…MWAM), and 500-520 (MIFT…WLVG).

The protein belongs to the OXA1/ALB3/YidC family. Type 1 subfamily. Interacts with the Sec translocase complex via SecD. Specifically interacts with transmembrane segments of nascent integral membrane proteins during membrane integration.

The protein resides in the cell inner membrane. Its function is as follows. Required for the insertion and/or proper folding and/or complex formation of integral membrane proteins into the membrane. Involved in integration of membrane proteins that insert both dependently and independently of the Sec translocase complex, as well as at least some lipoproteins. Aids folding of multispanning membrane proteins. The sequence is that of Membrane protein insertase YidC from Shewanella amazonensis (strain ATCC BAA-1098 / SB2B).